A 379-amino-acid polypeptide reads, in one-letter code: Alcohol dehydrogenase class-P (379 aa).

N-acetylserine is present on serine 2. Cysteine 47 provides a ligand contact to Zn(2+). An an alcohol-binding site is contributed by threonine 49. Threonine 49 contributes to the NAD(+) binding site. Aspartate 50, histidine 69, glutamate 70, cysteine 99, cysteine 102, cysteine 105, cysteine 113, and cysteine 177 together coordinate Zn(2+). Histidine 69 lines the an alcohol pocket. The NAD(+) site is built by valine 206 and aspartate 226. Serine 229 is subject to Phosphoserine. Residues arginine 231, threonine 272, valine 295, valine 297, threonine 320, phenylalanine 322, and arginine 372 each coordinate NAD(+).

It belongs to the zinc-containing alcohol dehydrogenase family. Class-P subfamily. Homodimer. Zn(2+) is required as a cofactor. Glutathionylated. As to expression, root specific. Also detected in etiolated seedlings and leaves in cold conditions.

The protein resides in the cytoplasm. It catalyses the reaction a primary alcohol + NAD(+) = an aldehyde + NADH + H(+). The enzyme catalyses a secondary alcohol + NAD(+) = a ketone + NADH + H(+). The catalysed reaction is ethanol + NAD(+) = acetaldehyde + NADH + H(+). Alcohol dehydrogenase activity show inverse correlation with the decreasing availability of oxygen. Slightly repressed by thiol-modifying agents N-ethylmaleimide (NEM) and 5,5-dithio-bis-(2-nitrobenzoic acid) (DTNB), as well as by methyl methanethiosulfonate (MMTS) in a dose-dependent manner. Inhibited by hydrogen peroxide H(2)O(2). Functionally, alcohol dehydrogenase catalyzing the reduction of toxic aldehydes to the corresponding alcohols. Mostly active on ethanol (EtOH), but exhibits broad substrate selectivity for primary and secondary alcohols (e.g. cinnamyl alcohol, octanol, geraniol, butanol, propyl alcohol, pentanol, isopentanol, ethylene glycol, isopropanol, methanol and tertiary butyl alcohol). Also catalyzes the reverse reaction to convert allyl alcohol to highly toxic acryl-aldehyde. Required for survival and acclimation in hypoxic conditions, especially in roots. Not able to catalyze NADH-dependent degradation of S-nitrosoglutathione (GSNO). The protein is Alcohol dehydrogenase class-P of Arabidopsis thaliana (Mouse-ear cress).